Consider the following 507-residue polypeptide: Monoogygenase CPUR_05431 (507 aa).

It belongs to the PheA/TfdB FAD monooxygenase family. It depends on FAD as a cofactor.

It participates in pigment biosynthesis. Monoogygenase; part of the ergochrome gene cluster responsible for the typical purple-black color of the ergot sclerotia. The ergochrome gene cluster produces several ergot pigments including the yellow ergochrome secalonic acid and its derivatives, as well as the red anthraquinones endocrocin and clavorubin. The pathway begins with the synthesis of atrochrysone thioester by the polyketide synthase (PKS) CPUR_05437. The atrochrysone carboxyl ACP thioesterase CPUR_05436 then breaks the thioester bond and releases the atrochrysone carboxylic acid from CPUR_05437. The atrochrysone carboxylic acid is then converted to atrochrysone which is further transformed into emodin anthrone. The next step is performed by the anthrone oxygenase CPUR_05434 that catalyzes the oxidation of emodinanthrone to emodin. Emodin is further modified to yield monodictyphenone via several steps involving CPUR_05427, CPUR_05428, CPUR_05429 and CPUR_05430. The short chain dehydrogenase/reductase CPUR_05418 then catalyzes the C-5 ketoreduction to give the xanthone skeleton of the monomeric units. Ergochromes formation requires further dimerization steps of different xanthone units, probably catalyzed by the cytochrome P450 monooxygenase CPUR_05419. CPUR_05425, CPUR_05426 and CPUR_05431 are unique to Claviceps, thus it is likely that they are involved in further modification of xanthone units or in their dimerization. The yellow ergochromes and the red anthraquinone pigments endocrocin and clavorubin are products from the same PKS derived precursors and the latter are likely shunt products in the pathway of xanthone biosynthesis. It is proposed that atrochrysone carboxylic acid released from the PKS CPUR_05437 can also be converted to endocrocin anthrone which is further oxidized into endocrocin by CPUR_05435. Endocrocin could be then modified to clavorubin, possibly by CPUR_05423 and CPUR_05431. Clavorubin is the principal anthraquinone metabolite produced by the cluster with a much higher yield compared to endocrocin. This Claviceps purpurea (strain 20.1) (Ergot fungus) protein is Monoogygenase CPUR_05431.